A 71-amino-acid chain; its full sequence is DNA-directed RNA polymerase subunit omega (71 aa).

It belongs to the RNA polymerase subunit omega family. In terms of assembly, the RNAP catalytic core consists of 2 alpha, 1 beta, 1 beta' and 1 omega subunit. When a sigma factor is associated with the core the holoenzyme is formed, which can initiate transcription.

It carries out the reaction RNA(n) + a ribonucleoside 5'-triphosphate = RNA(n+1) + diphosphate. Its function is as follows. Promotes RNA polymerase assembly. Latches the N- and C-terminal regions of the beta' subunit thereby facilitating its interaction with the beta and alpha subunits. The chain is DNA-directed RNA polymerase subunit omega from Aromatoleum aromaticum (strain DSM 19018 / LMG 30748 / EbN1) (Azoarcus sp. (strain EbN1)).